The following is a 508-amino-acid chain: Photosystem II CP47 reaction center protein (508 aa).

Helical transmembrane passes span 21–36 (SVHL…WAGS), 101–115 (IVLS…IWHW), 140–156 (GIHL…FGAF), 203–218 (IAAG…FHLS), 237–252 (VLSS…AFVV), and 457–472 (TFAL…HGAR).

Belongs to the PsbB/PsbC family. PsbB subfamily. As to quaternary structure, PSII is composed of 1 copy each of membrane proteins PsbA, PsbB, PsbC, PsbD, PsbE, PsbF, PsbH, PsbI, PsbJ, PsbK, PsbL, PsbM, PsbT, PsbX, PsbY, PsbZ, Psb30/Ycf12, at least 3 peripheral proteins of the oxygen-evolving complex and a large number of cofactors. It forms dimeric complexes. Binds multiple chlorophylls. PSII binds additional chlorophylls, carotenoids and specific lipids. serves as cofactor.

Its subcellular location is the plastid. The protein resides in the chloroplast thylakoid membrane. One of the components of the core complex of photosystem II (PSII). It binds chlorophyll and helps catalyze the primary light-induced photochemical processes of PSII. PSII is a light-driven water:plastoquinone oxidoreductase, using light energy to abstract electrons from H(2)O, generating O(2) and a proton gradient subsequently used for ATP formation. The chain is Photosystem II CP47 reaction center protein from Angiopteris evecta (Mule's foot fern).